The sequence spans 412 residues: MHSHTNETAATSTTAGAVTNGAGGSGAGAAGAHGSTEGKIRCIFLSEFHATAGCKISCQVPDNYISKDVFDAINVYIIPKQHLQRCILTVNAMDVKIVGYPVGIQDQQKYARNAFLFNLCFVCDSRARSVQYEPVVKKLSEYLIMMEEESCFLSREDDKRRLQNIFETVLRDLNERKVATIVEGDNTIYLKIVMHKPDPPPVKDHMVPLLLANLRDAPLDNWDLTTQQILPYINGINHVARIAAEADVETDLVKSCIQNLVYYGVVQLLPILKYSNVYMTQNLKHLIQSASLSGACRKYVALRPDKTLPSVQRIFQFYASMTHGVTLRAICQRLCPQHHNIDERRMVIFGLQHRFIRCIHKYPVFTGSVPSGRQKMYTGLISFDEICCKTGLSPCTIERDIEKDTNVTVIWK.

The protein belongs to the NPR2 family. As to quaternary structure, component of the GATOR complex consisting of mio, Nup44A/Seh1, Im11, Nplr3, Nplr2, Wdr24, Wdr59 and Sec13. Within the GATOR complex, probable component of the GATOR1 subcomplex which is likely composed of Iml1, Nplr2 and Nplr3. Interacts with Nprl3.

It localises to the cytoplasm. The protein resides in the lysosome. In terms of biological role, an essential component of the GATOR subcomplex GATOR1 which functions as an inhibitor of the amino acid-sensing branch of the TORC1 signaling pathway. The two GATOR subcomplexes, GATOR1 and GATOR2, regulate the TORC1 pathway in order to mediate metabolic homeostasis, female gametogenesis and the response to amino acid limitation and complete starvation. The function of GATOR1 in negatively regulating the TORC1 pathway is essential for maintaining baseline levels of TORC1 activity under nutrient rich conditions, and for promoting survival during amino acid or complete starvation by inhibiting TORC1-dependent cell growth and promoting catabolic metabolism and autophagy. In addition, this inhibition of TORC1 is necessary to maintain female fertility under normal conditions and during periods of nutrient stress. GATOR1 and GATOR2 act at different stages of oogenesis to regulate TORC1 in order to control meiotic entry and promote oocyte growth and development. After exactly four mitotic cyst divisions, the GATOR1 complex members (Iml1, Nprl2 and Nprl3) down-regulate TORC1 to slow cellular metabolism and promote the mitotic/meiotic transition. At later stages of oogenesis, the mio and Nup44A components of the GATOR2 complex inhibit GATOR1 and thus activate TORC1 to promote meiotic progression, and drive oocyte growth and development. In Drosophila melanogaster (Fruit fly), this protein is GATOR complex protein NPRL2.